The primary structure comprises 440 residues: Proline--tRNA ligase (440 aa).

The protein belongs to the class-II aminoacyl-tRNA synthetase family. ProS type 2 subfamily. In terms of assembly, homodimer.

The protein resides in the cytoplasm. It catalyses the reaction tRNA(Pro) + L-proline + ATP = L-prolyl-tRNA(Pro) + AMP + diphosphate. In terms of biological role, catalyzes the attachment of proline to tRNA(Pro) in a two-step reaction: proline is first activated by ATP to form Pro-AMP and then transferred to the acceptor end of tRNA(Pro). The sequence is that of Proline--tRNA ligase from Azorhizobium caulinodans (strain ATCC 43989 / DSM 5975 / JCM 20966 / LMG 6465 / NBRC 14845 / NCIMB 13405 / ORS 571).